The chain runs to 313 residues: Putative olfactory receptor 2B3 (313 aa).

Over 1–25 (MNWENESSPKEFILLGFSDRAWLQM) the chain is Extracellular. A glycan (N-linked (GlcNAc...) asparagine) is linked at Asn-5. A helical membrane pass occupies residues 26-49 (PLFVVLLISYTITIFGNVSIMMVC). Over 50 to 57 (ILDPKLHT) the chain is Cytoplasmic. Residues 58 to 79 (PMYFFLTNLSILDLCYTTTTVP) traverse the membrane as a helical segment. Residues 80–100 (HMLVNIGCNKKTISYAGCVAH) are Extracellular-facing. A disulfide bridge links Cys-97 with Cys-189. Residues 101-120 (LIIFLALGATECLLLAVMSF) form a helical membrane-spanning segment. The Cytoplasmic portion of the chain corresponds to 121 to 139 (DRYVAVCRPLHYVVIMNYW). The chain crosses the membrane as a helical span at residues 140 to 158 (FCLRMAAFSWLIGFGNSVL). Topologically, residues 159–195 (QSSLTLNMPRCGHQEVDHFFCEVPALLKLSCADTKPI) are extracellular. The chain crosses the membrane as a helical span at residues 196–219 (EAELFFFSVLILLIPVTLILISYG). Topologically, residues 220–236 (FIAQAVLKIRSAEGRQK) are cytoplasmic. The chain crosses the membrane as a helical span at residues 237 to 259 (AFGTCGSHMIVVSLFYGTAIYMY). Topologically, residues 260–272 (LQPPSSTSKDWGK) are extracellular. A helical membrane pass occupies residues 273-292 (MVSLFYGIITSMLNSLIYSL). Over 293–313 (RNKDMKEAFKRLMPRIFFCKK) the chain is Cytoplasmic.

This sequence belongs to the G-protein coupled receptor 1 family.

It is found in the cell membrane. In terms of biological role, odorant receptor. The sequence is that of Putative olfactory receptor 2B3 (OR2B3) from Homo sapiens (Human).